The following is a 260-amino-acid chain: Hydroxyethylthiazole kinase 1 (260 aa).

M39 contributes to the substrate binding site. R115 and T160 together coordinate ATP. G187 provides a ligand contact to substrate.

It belongs to the Thz kinase family. Mg(2+) is required as a cofactor.

It catalyses the reaction 5-(2-hydroxyethyl)-4-methylthiazole + ATP = 4-methyl-5-(2-phosphooxyethyl)-thiazole + ADP + H(+). The protein operates within cofactor biosynthesis; thiamine diphosphate biosynthesis; 4-methyl-5-(2-phosphoethyl)-thiazole from 5-(2-hydroxyethyl)-4-methylthiazole: step 1/1. Catalyzes the phosphorylation of the hydroxyl group of 4-methyl-5-beta-hydroxyethylthiazole (THZ). In Streptococcus pneumoniae (strain Hungary19A-6), this protein is Hydroxyethylthiazole kinase 1.